The chain runs to 210 residues: Signal peptidase complex catalytic subunit SEC11 (210 aa).

Over 1-21 (MLAGLSPHLSNLRRSLTQVLN) the chain is Cytoplasmic. Residues 22–38 (FALVLSTAFMMWKGLSI) traverse the membrane as a helical; Signal-anchor for type II membrane protein segment. The Lumenal portion of the chain corresponds to 39-210 (YTNSSSPIVV…MGAMVILQRE (172 aa)). A glycan (N-linked (GlcNAc...) asparagine) is linked at Asn-41. Residues Ser-53, His-92, and Asp-152 each act as charge relay system in the active site. The segment at 196 to 207 (VLLGIMGAMVIL) is C-terminal short (CTS) helix.

This sequence belongs to the peptidase S26B family. In terms of assembly, component of the signal peptidase complex (SPC) composed of a catalytic subunit SEC11 and three accessory subunits SPC1, SPC2 and SPC3. The complex induces a local thinning of the ER membrane which is used to measure the length of the signal peptide (SP) h-region of protein substrates. This ensures the selectivity of the complex towards h-regions shorter than 18-20 amino acids. SPC associates with the translocon complex.

The protein localises to the endoplasmic reticulum membrane. The enzyme catalyses Cleavage of hydrophobic, N-terminal signal or leader sequences from secreted and periplasmic proteins.. Catalytic component of the signal peptidase complex (SPC) which catalyzes the cleavage of N-terminal signal sequences from nascent proteins as they are translocated into the lumen of the endoplasmic reticulum. Specifically cleaves N-terminal signal peptides that contain a hydrophobic alpha-helix (h-region) shorter than 18-20 amino acids. The polypeptide is Signal peptidase complex catalytic subunit SEC11 (SEC11) (Coccidioides posadasii (strain C735) (Valley fever fungus)).